The sequence spans 378 residues: MIYDFLKEKKFGYTTGSCVVAGAYCGIYYLKHSVKLNIVELENSKNDKLIIPIEDVKLGKIATIKNINNTGKIKPNRATTIVKKFSGEDIDITNGIDIVVDVELLKMEKDKPKIEIVGGNGVGIVTKDGLQIKKGEYAINPKPREMIKNNIINLLDDDERAIIKITIPKGEELAKKTLNPKLGIIGGISILGTTGIVRPMSNEAYKESLAPQIDVALANNYKKLIFTPGNIGTKYAKIKYGVDDDNIVEVSNFWSFMLDKAVEKGVKDILIFGHSGKIIKLAGGIYDTHSKVADARNEILTAYSSPFINDKQILKNILYSNTTEEIVKILEKENILHEVFNLIAERVVERVSSRWEGIKFSCVIIDMKGDILGSHIYS.

It belongs to the CbiD family.

It carries out the reaction Co-precorrin-5B + S-adenosyl-L-methionine = Co-precorrin-6A + S-adenosyl-L-homocysteine. The protein operates within cofactor biosynthesis; adenosylcobalamin biosynthesis; cob(II)yrinate a,c-diamide from sirohydrochlorin (anaerobic route): step 6/10. In terms of biological role, catalyzes the methylation of C-1 in cobalt-precorrin-5B to form cobalt-precorrin-6A. The protein is Cobalt-precorrin-5B C(1)-methyltransferase of Methanococcus aeolicus (strain ATCC BAA-1280 / DSM 17508 / OCM 812 / Nankai-3).